A 255-amino-acid polypeptide reads, in one-letter code: Pimeloyl-[acyl-carrier protein] methyl ester esterase (255 aa).

Residues 16 to 241 (LVLLHGWGMN…QSSHAPFMTE (226 aa)) form the AB hydrolase-1 domain. Residues W22, 82–83 (SL), and 143–147 (FMALQ) each bind substrate. Catalysis depends on S82, which acts as the Nucleophile. Catalysis depends on residues D207 and H235. H235 contacts substrate.

It belongs to the AB hydrolase superfamily. Carboxylesterase BioH family. As to quaternary structure, monomer.

Its subcellular location is the cytoplasm. The enzyme catalyses 6-carboxyhexanoyl-[ACP] methyl ester + H2O = 6-carboxyhexanoyl-[ACP] + methanol + H(+). It participates in cofactor biosynthesis; biotin biosynthesis. Functionally, the physiological role of BioH is to remove the methyl group introduced by BioC when the pimeloyl moiety is complete. It allows to synthesize pimeloyl-ACP via the fatty acid synthetic pathway through the hydrolysis of the ester bonds of pimeloyl-ACP esters. This chain is Pimeloyl-[acyl-carrier protein] methyl ester esterase, found in Vibrio parahaemolyticus serotype O3:K6 (strain RIMD 2210633).